The following is a 937-amino-acid chain: Coiled-coil domain-containing protein 39 (937 aa).

4 coiled-coil regions span residues 16–137 (AIPV…CQMN), 165–339 (QQDD…KKDI), 365–615 (EKTL…SQIR), and 664–816 (VIKA…LKQT). Residues 866–937 (LPTARGPSSR…NIPKEKKLSK (72 aa)) form a disordered region. The span at 873–887 (SSRSSSQSSSLSSFR) shows a compositional bias: low complexity. Ser-888 and Ser-896 each carry phosphoserine. Residues 915-928 (NDSSRSASSGSNSN) are compositionally biased toward low complexity.

It belongs to the CCDC39 family. In terms of tissue distribution, strongly expressed in tissues rich in ciliated cells. Expressed in olfactory and vomeronasal sensory neurons and the respiratory epithelium. Expressed in node cells carrying motile cilia, in upper and lower airways, and in ependymal and choroid plexus cells.

The protein localises to the cytoplasm. It localises to the cytoskeleton. It is found in the cilium axoneme. Functionally, required for assembly of dynein regulatory complex (DRC) and inner dynein arm (IDA) complexes, which are responsible for ciliary beat regulation, thereby playing a central role in motility in cilia and flagella. Probably acts together with CCDC40 to form a molecular ruler that determines the 96 nanometer (nm) repeat length and arrangements of components in cilia and flagella. Not required for outer dynein arm complexes assembly. The sequence is that of Coiled-coil domain-containing protein 39 from Mus musculus (Mouse).